The following is a 254-amino-acid chain: 3-deoxy-manno-octulosonate cytidylyltransferase (254 aa).

Belongs to the KdsB family.

The protein localises to the cytoplasm. The catalysed reaction is 3-deoxy-alpha-D-manno-oct-2-ulosonate + CTP = CMP-3-deoxy-beta-D-manno-octulosonate + diphosphate. Its pathway is nucleotide-sugar biosynthesis; CMP-3-deoxy-D-manno-octulosonate biosynthesis; CMP-3-deoxy-D-manno-octulosonate from 3-deoxy-D-manno-octulosonate and CTP: step 1/1. It functions in the pathway bacterial outer membrane biogenesis; lipopolysaccharide biosynthesis. Its function is as follows. Activates KDO (a required 8-carbon sugar) for incorporation into bacterial lipopolysaccharide in Gram-negative bacteria. In Chlamydia abortus (strain DSM 27085 / S26/3) (Chlamydophila abortus), this protein is 3-deoxy-manno-octulosonate cytidylyltransferase.